The primary structure comprises 260 residues: HTH-type transcriptional repressor NanR (260 aa).

One can recognise an HTH gntR-type domain in the interval 27 to 95 (KKLSDMVEEE…NGERARVSMP (69 aa)). A DNA-binding region (H-T-H motif) is located at residues 55–74 (ERELMEFFNVGRPSVREALA).

This sequence belongs to the NanR family.

Transcriptional repressor that controls expression of the genes required for the catabolism of sialic acids. This Enterobacter sp. (strain 638) protein is HTH-type transcriptional repressor NanR.